A 234-amino-acid polypeptide reads, in one-letter code: Filarial antigen Av33 (234 aa).

The signal sequence occupies residues 1-17 (MKILSCLLLCTITVLEG). A disulfide bond links C135 and C230. Residues 204 to 234 (TSQASEATTIPTTTQTPVEAPETPSFCVPIY) form a disordered region. The span at 211 to 220 (TTIPTTTQTP) shows a compositional bias: low complexity.

This sequence belongs to the protease inhibitor I33 family.

It localises to the secreted. Functionally, aspartyl protease inhibitor. The sequence is that of Filarial antigen Av33 from Acanthocheilonema viteae (Filarial nematode worm).